Consider the following 370-residue polypeptide: CST complex subunit STN1 (370 aa).

The tract at residues 1 to 187 is interaction with CTC1; sequence MESNSSQCED…KVYDQPFHSP (187 aa). Residues 57 to 157 constitute a DNA-binding region (OB); that stretch reads VDILGTVIGV…EIHATTYYKV (101 aa). 2 winged helix-turn-helix (wHTH) regions span residues 193–297 and 298–370; these read EALS…YVTR and EDKE…YTAF.

It belongs to the STN1 family. In terms of assembly, component of the CST complex, composed of TEN1/C17orf106, CTC1/C17orf68 and STN1; in the complex interacts directly with TEN1 and CTC1. Interacts with ACD/TPP1, POT1 and POLA1.

The protein localises to the nucleus. It is found in the chromosome. The protein resides in the telomere. Its function is as follows. Component of the CST complex proposed to act as a specialized replication factor promoting DNA replication under conditions of replication stress or natural replication barriers such as the telomere duplex. The CST complex binds single-stranded DNA with high affinity in a sequence-independent manner, while isolated subunits bind DNA with low affinity by themselves. Initially the CST complex has been proposed to protect telomeres from DNA degradation. However, the CST complex has been shown to be involved in several aspects of telomere replication. The CST complex inhibits telomerase and is involved in telomere length homeostasis; it is proposed to bind to newly telomerase-synthesized 3' overhangs and to terminate telomerase action implicating the association with the ACD:POT1 complex thus interfering with its telomerase stimulation activity. The CST complex is also proposed to be involved in fill-in synthesis of the telomeric C-strand probably implicating recruitment and activation of DNA polymerase alpha. The CST complex facilitates recovery from many forms of exogenous DNA damage; seems to be involved in the re-initiation of DNA replication at repaired forks and/or dormant origins. Required for efficicient replication of the duplex region of the telomere. Promotes efficient replication of lagging-strand telomeres. Promotes general replication start following replication-fork stalling implicating new origin firing. May be in involved in C-strand fill-in during late S/G2 phase independent of its role in telomere duplex replication. In Bos taurus (Bovine), this protein is CST complex subunit STN1.